Here is a 492-residue protein sequence, read N- to C-terminus: Replication factor C large subunit (492 aa).

Residue 46–53 coordinates ATP; sequence GPPGSGKT. A disordered region spans residues 445 to 492; that stretch reads VIPKRPKISDNQISEILTKDNNPKDDVKKASKKPESTSKKQATLDKFF. Residues 461 to 482 show a composition bias toward basic and acidic residues; that stretch reads LTKDNNPKDDVKKASKKPESTS.

Belongs to the activator 1 small subunits family. RfcL subfamily. Heteromultimer composed of small subunits (RfcS) and large subunits (RfcL).

Functionally, part of the RFC clamp loader complex which loads the PCNA sliding clamp onto DNA. This is Replication factor C large subunit from Methanococcus vannielii (strain ATCC 35089 / DSM 1224 / JCM 13029 / OCM 148 / SB).